We begin with the raw amino-acid sequence, 148 residues long: Large ribosomal subunit protein bL9 (148 aa).

The protein belongs to the bacterial ribosomal protein bL9 family.

Its function is as follows. Binds to the 23S rRNA. In Aliarcobacter butzleri (strain RM4018) (Arcobacter butzleri), this protein is Large ribosomal subunit protein bL9.